The following is a 403-amino-acid chain: Acetyl-CoA acetyltransferase 2 (403 aa).

Cys-97 functions as the Acyl-thioester intermediate in the catalytic mechanism. Lys-237 is a CoA binding site. Ala-254 provides a ligand contact to K(+). Residue Ser-258 coordinates CoA. Val-355 lines the K(+) pocket. Catalysis depends on proton acceptor residues His-359 and Cys-389.

Belongs to the thiolase-like superfamily. Thiolase family. Expressed in root tips, emerging leaves, young leaves, stems, and anthers at the microspore stage.

It localises to the cytoplasm. It is found in the peroxisome. The catalysed reaction is 2 acetyl-CoA = acetoacetyl-CoA + CoA. It participates in metabolic intermediate biosynthesis; (R)-mevalonate biosynthesis; (R)-mevalonate from acetyl-CoA: step 1/3. Its function is as follows. Catalyzes the condensation of two molecules of acetyl-CoA to produce acetoacetyl-CoA. Generates the bulk of the acetoacetyl-CoA precursor required for the cytosol-localized, mevalonate-derived isoprenoid biosynthesis. The generated isoprenoids are required for normal growth and development. Essential protein during embryogenesis. The chain is Acetyl-CoA acetyltransferase 2 from Arabidopsis thaliana (Mouse-ear cress).